The chain runs to 81 residues: Delta-conotoxin PVIA (81 aa).

Residues 1-22 (MKLTCVMIVAVLFLTAWTFVTA) form the signal peptide. A propeptide spanning residues 23–49 (DDSKNGLENHFWKARDEMKNREASKLD) is cleaved from the precursor. Intrachain disulfides connect Cys-54/Cys-69, Cys-61/Cys-73, and Cys-68/Cys-78. 4-hydroxyproline is present on residues Pro-57 and Pro-65. A Glycine amide; in form delta-conotoxin PVIA modification is found at Gly-80.

In terms of processing, the difference between delta-conotoxin PVIA and [deamido]-delta-conotoxin PVIA lies in the state of amidation of Gly-80. In terms of tissue distribution, expressed by the venom duct.

Its subcellular location is the secreted. Its function is as follows. Delta-conotoxins bind to site 6 of voltage-gated sodium channels (Nav) and inhibit the inactivation process. This toxin shows weak effects on rNav1.2/SCN2A (EC(50)=2.9 uM), rNav1.4/SCN4A (EC(50)=5.2 uM), hNav1.7/SCN9A (EC(50)=1.9 uM) and rNav1.7/SCN9A (EC(50)=6.4 uM). In vivo, this toxin shows different effects. In mice, injection of this toxin causes hyperactivity, rapid running, limb extension, and death. In fish, the peptide elicites spurts of rapid swimming, with twisted motions, quivering fins and the lockjaw extended mouth syndrome. Rigid paralysis and death are observed at higher doses. In mollusks, this peptide is inactive. Injection of this peptide together with the kappa-conotoxin PVIIA causes the sudden tetanus of prey (STOP) syndrome, which is a single, lethal 'fin-pop' in envenomed fish. The chain is Delta-conotoxin PVIA from Conus purpurascens (Purple cone).